Consider the following 704-residue polypeptide: Inhibitor of carbonic anhydrase (704 aa).

The N-terminal stretch at 1 to 19 is a signal peptide; it reads MRLAFCVLLCAGSLGLCLA. Transferrin-like domains follow at residues 25 to 347 and 357 to 689; these read VRWC…HLRR and VMWC…NVRQ. 16 disulfide bridges follow: Cys28-Cys67, Cys38-Cys58, Cys137-Cys213, Cys172-Cys188, Cys175-Cys196, Cys185-Cys198, Cys246-Cys260, Cys360-Cys392, Cys370-Cys383, Cys417-Cys699, Cys440-Cys662, Cys472-Cys549, Cys496-Cys690, Cys506-Cys520, Cys517-Cys532, and Cys589-Cys603. An N-linked (GlcNAc...) asparagine glycan is attached at Asn491.

Belongs to the transferrin family. Monomer. Interacts (via transferrin-like domain 2) with CA2. Post-translationally, N-glycosylated. In terms of tissue distribution, blood plasma (at protein level).

The protein localises to the secreted. In terms of biological role, inhibitor for carbonic anhydrase 2 (CA2). Does not bind iron ions. The sequence is that of Inhibitor of carbonic anhydrase from Sus scrofa (Pig).